Consider the following 807-residue polypeptide: Glycerol-3-phosphate acyltransferase (807 aa).

Residues C308 to M313 carry the HXXXXD motif motif.

The protein belongs to the GPAT/DAPAT family.

The protein resides in the cell inner membrane. It carries out the reaction sn-glycerol 3-phosphate + an acyl-CoA = a 1-acyl-sn-glycero-3-phosphate + CoA. It functions in the pathway phospholipid metabolism; CDP-diacylglycerol biosynthesis; CDP-diacylglycerol from sn-glycerol 3-phosphate: step 1/3. This Shewanella loihica (strain ATCC BAA-1088 / PV-4) protein is Glycerol-3-phosphate acyltransferase.